Reading from the N-terminus, the 236-residue chain is 15,16-dihydrobiliverdin:ferredoxin oxidoreductase (236 aa).

Belongs to the HY2 family.

It catalyses the reaction 15,16-dihydrobiliverdin + oxidized 2[4Fe-4S]-[ferredoxin] = biliverdin IXalpha + reduced 2[4Fe-4S]-[ferredoxin] + 2 H(+). Its function is as follows. Catalyzes the two-electron reduction of biliverdin IX-alpha at the C15 methine bridge. The chain is 15,16-dihydrobiliverdin:ferredoxin oxidoreductase from Prochlorococcus marinus (strain MIT 9215).